We begin with the raw amino-acid sequence, 105 residues long: Thioredoxin (105 aa).

One can recognise a Thioredoxin domain in the interval 1–105 (MANNVMDSSF…SLLDWINKSI (105 aa)). Cysteine 30 and cysteine 33 are joined by a disulfide.

Belongs to the thioredoxin family.

Component of the thioredoxin-thioredoxin reductase system. Participates in various redox reactions through the reversible oxidation of its active center dithiol to a disulfide and catalyzes dithiol-disulfide exchange reactions. This chain is Thioredoxin (trxA), found in Rickettsia conorii (strain ATCC VR-613 / Malish 7).